A 129-amino-acid polypeptide reads, in one-letter code: MHAPQWLGAEGETIAAKYLAAQGYRILDRNYRFHRNEIDIIALDGGVLCFIEVKTRTSIGKGHPAESVTPRKQKEIIRAATGYLAGLDDPWVTCRFDVIAVLAGSLDERSIREYEIEHLKAAFIVADEG.

This sequence belongs to the UPF0102 family.

The chain is UPF0102 protein Cpar_0015 from Chlorobaculum parvum (strain DSM 263 / NCIMB 8327) (Chlorobium vibrioforme subsp. thiosulfatophilum).